The following is a 978-amino-acid chain: uncharacterized protein (978 aa).

An N-terminal signal peptide occupies residues 1-27 (MHSWKKKLVVSQLALACTLAITSQANA). Residues 713–978 (GLADNGGAWV…SANVGVKYTW (266 aa)) form the Autotransporter domain.

This is an uncharacterized protein from Salmonella typhimurium (strain LT2 / SGSC1412 / ATCC 700720).